The chain runs to 146 residues: Hemoglobin subunit beta (146 aa).

The Globin domain occupies 2–146 (QWSDSERTII…VVMFLGKQYH (145 aa)). Positions 63 and 92 each coordinate heme b.

This sequence belongs to the globin family. Heterotetramer of two alpha chains and two beta chains. Red blood cells.

Involved in oxygen transport from the lung to the various peripheral tissues. This Artedidraco orianae (Barbeled plunderfish) protein is Hemoglobin subunit beta (hbb).